The sequence spans 280 residues: Bicarbonate transport system permease protein CmpB (280 aa).

7 helical membrane passes run 32–52 (PIFG…AGLI), 99–119 (YSLA…QPLL), 126–146 (IFQF…LVAL), 153–173 (AIFV…TEGV), 198–218 (ILIP…IGLA), 219–239 (WLAI…GFFI), and 251–271 (IILA…GIAY). The region spanning 88-266 (TLASLGRVAQ…YIGAVGLLLD (179 aa)) is the ABC transmembrane type-1 domain.

Belongs to the binding-protein-dependent transport system permease family. The complex is composed of two ATP-binding proteins (CmpC and CmpD), a transmembrane protein (CmpB) and a solute-binding protein (CmpA).

The protein localises to the cell inner membrane. Part of the ABC transporter complex CmpABCD involved in bicarbonate transport. Probably responsible for the translocation of the substrate across the membrane. In Synechocystis sp. (strain ATCC 27184 / PCC 6803 / Kazusa), this protein is Bicarbonate transport system permease protein CmpB (cmpB).